The chain runs to 365 residues: BTB/POZ and TAZ domain-containing protein 1 (365 aa).

In terms of domain architecture, BTB spans 25 to 96; the sequence is TDVEIITSGR…LYSPSVTENE (72 aa). The Nuclear localization signal motif lies at 193-202; sequence RKKRRRRHRR. Residues 205–304 form a TAZ-type zinc finger; sequence NLYLQLSEAM…SESCRVPLCR (100 aa). The segment at 315-338 is caM-binding; it reads KMVEDTKWKVLVRRVASAKAMSSL.

As to quaternary structure, interacts with CUL3A. Interacts with GTE9/BET9 and GTE11/BET10 through the BTB domain. In terms of tissue distribution, preferentially expressed in young leaves, roots and stems.

The protein resides in the nucleus. It localises to the cytoplasm. It functions in the pathway protein modification; protein ubiquitination. May act as a substrate-specific adapter of an E3 ubiquitin-protein ligase complex (CUL3-RBX1-BTB) which mediates the ubiquitination and subsequent proteasomal degradation of target proteins. Also targeted for degradation by the 26S proteasome pathway. May be involved in gametophyte development. This is BTB/POZ and TAZ domain-containing protein 1 (BT1) from Arabidopsis thaliana (Mouse-ear cress).